Here is a 221-residue protein sequence, read N- to C-terminus: Imidazoleglycerol-phosphate dehydratase (221 aa).

This sequence belongs to the imidazoleglycerol-phosphate dehydratase family.

The enzyme catalyses D-erythro-1-(imidazol-4-yl)glycerol 3-phosphate = 3-(imidazol-4-yl)-2-oxopropyl phosphate + H2O. Its pathway is amino-acid biosynthesis; L-histidine biosynthesis; L-histidine from 5-phospho-alpha-D-ribose 1-diphosphate: step 6/9. This chain is Imidazoleglycerol-phosphate dehydratase (HIS3), found in Kluyveromyces lactis (strain ATCC 8585 / CBS 2359 / DSM 70799 / NBRC 1267 / NRRL Y-1140 / WM37) (Yeast).